A 507-amino-acid chain; its full sequence is Maturase K (507 aa).

Belongs to the intron maturase 2 family. MatK subfamily.

It is found in the plastid. Its subcellular location is the chloroplast. In terms of biological role, usually encoded in the trnK tRNA gene intron. Probably assists in splicing its own and other chloroplast group II introns. The polypeptide is Maturase K (Ranunculus macranthus (Large buttercup)).